The chain runs to 257 residues: Enterotoxin type E (257 aa).

The first 27 residues, 1-27, serve as a signal peptide directing secretion; it reads MKKTAFILLLFIALTLTTSPLVNGSEK. A disulfide bridge links C120 with C130. The Zn(2+) site is built by H211, H249, and D251.

The protein belongs to the staphylococcal/streptococcal toxin family. Interacts with host MHC class II molecules composed of alpha/HLA-DRA and beta/HLA-DRB1 chains. Interacts with host T-cell receptor beta variable TRBV7-9. The cofactor is Zn(2+).

The protein localises to the secreted. Its function is as follows. Staphylococcal enterotoxin that activates the host immune system by binding as unprocessed molecules to major histocompatibility (MHC) complex class II and T-cell receptor (TCR) molecules. In turn, this ternary complex activates a large number of T-lymphocytes initiating a systemic release of pro-inflammatory cytokines. Also causes the intoxication staphylococcal food poisoning syndrome. The polypeptide is Enterotoxin type E (entE) (Staphylococcus aureus).